The primary structure comprises 147 residues: Large ribosomal subunit protein uL13 (147 aa).

It belongs to the universal ribosomal protein uL13 family. In terms of assembly, part of the 50S ribosomal subunit.

Functionally, this protein is one of the early assembly proteins of the 50S ribosomal subunit, although it is not seen to bind rRNA by itself. It is important during the early stages of 50S assembly. This is Large ribosomal subunit protein uL13 from Deinococcus geothermalis (strain DSM 11300 / CIP 105573 / AG-3a).